We begin with the raw amino-acid sequence, 242 residues long: MTHSPLAQFDIKKLIDIKMFGFDVSFTNSSIYMLLASILALTYFYLAFYNRKLVPSRLQVSAEIVYNLVADMLNQNIGVKGRKFIPLVFSLFIFILFCNLLGMTPYSFTATSHIIVTFTLAILVFLIVTIVGFVKHGLRFLTLFLPHGTPLWLAPLIIVIELFTYLARPVSLSLRLAANMMAGHVLLKVIAGFTVSLMIYLKFLPIPIMVILIGFEIFVAILQAYIFTILSCMYLNDAINLH.

A run of 6 helical transmembrane segments spans residues 29–49 (SSIY…LAFY), 84–104 (FIPL…LGMT), 114–134 (IIVT…VGFV), 140–160 (FLTL…IIVI), 181–201 (MAGH…MIYL), and 203–223 (FLPI…AILQ).

Belongs to the ATPase A chain family. As to quaternary structure, F-type ATPases have 2 components, CF(1) - the catalytic core - and CF(0) - the membrane proton channel. CF(1) has five subunits: alpha(3), beta(3), gamma(1), delta(1), epsilon(1). CF(0) has three main subunits: a(1), b(2) and c(9-12). The alpha and beta chains form an alternating ring which encloses part of the gamma chain. CF(1) is attached to CF(0) by a central stalk formed by the gamma and epsilon chains, while a peripheral stalk is formed by the delta and b chains.

The protein resides in the cell inner membrane. Key component of the proton channel; it plays a direct role in the translocation of protons across the membrane. This Rickettsia peacockii (strain Rustic) protein is ATP synthase subunit a.